Reading from the N-terminus, the 295-residue chain is Sulfotransferase 1 family member D1 (295 aa).

48–53 provides a ligand contact to 3'-phosphoadenylyl sulfate; the sequence is KSGTTW. Residues F81 and 106–108 each bind substrate; that span reads KTH. The Proton acceptor role is filled by H108. 3'-phosphoadenylyl sulfate contacts are provided by R130 and S138. F142 lines the substrate pocket. 3'-phosphoadenylyl sulfate is bound by residues Y193, 227–232, and 257–259; these read SSFSVM and RKG.

It belongs to the sulfotransferase 1 family. Detected in kidney and liver. Detected in kidney collecting duct cells.

Its subcellular location is the cytoplasm. Its function is as follows. Sulfotransferase with broad substrate specificity that utilizes 3'-phospho-5'-adenylyl sulfate (PAPS) as sulfonate donor to catalyze the sulfate conjugation of catecholamines, such as dopamine, prostaglandins, leukotriene E4, drugs and xenobiotic compounds. Has sulfotransferase activity towards p-nitrophenol, 2-naphthylamine and minoxidil (in vitro). Sulfonation increases the water solubility of most compounds, and therefore their renal excretion, but it can also result in bioactivation to form active metabolites. This Mus musculus (Mouse) protein is Sulfotransferase 1 family member D1 (Sult1d1).